The primary structure comprises 127 residues: Ribosome-binding factor A (127 aa).

This sequence belongs to the RbfA family. As to quaternary structure, monomer. Binds 30S ribosomal subunits, but not 50S ribosomal subunits or 70S ribosomes.

It is found in the cytoplasm. In terms of biological role, one of several proteins that assist in the late maturation steps of the functional core of the 30S ribosomal subunit. Associates with free 30S ribosomal subunits (but not with 30S subunits that are part of 70S ribosomes or polysomes). Required for efficient processing of 16S rRNA. May interact with the 5'-terminal helix region of 16S rRNA. This chain is Ribosome-binding factor A, found in Glaesserella parasuis serovar 5 (strain SH0165) (Haemophilus parasuis).